Here is an 87-residue protein sequence, read N- to C-terminus: Translation initiation factor IF-1 2 (87 aa).

Residues 1–72 (MAKEELLELD…TKGRINFRHK (72 aa)) form the S1-like domain.

It belongs to the IF-1 family. Component of the 30S ribosomal translation pre-initiation complex which assembles on the 30S ribosome in the order IF-2 and IF-3, IF-1 and N-formylmethionyl-tRNA(fMet); mRNA recruitment can occur at any time during PIC assembly.

The protein resides in the cytoplasm. Functionally, one of the essential components for the initiation of protein synthesis. Stabilizes the binding of IF-2 and IF-3 on the 30S subunit to which N-formylmethionyl-tRNA(fMet) subsequently binds. Helps modulate mRNA selection, yielding the 30S pre-initiation complex (PIC). Upon addition of the 50S ribosomal subunit IF-1, IF-2 and IF-3 are released leaving the mature 70S translation initiation complex. The polypeptide is Translation initiation factor IF-1 2 (Burkholderia ambifaria (strain ATCC BAA-244 / DSM 16087 / CCUG 44356 / LMG 19182 / AMMD) (Burkholderia cepacia (strain AMMD))).